The chain runs to 118 residues: Large ribosomal subunit protein bL17 (118 aa).

This sequence belongs to the bacterial ribosomal protein bL17 family. Part of the 50S ribosomal subunit. Contacts protein L32.

The sequence is that of Large ribosomal subunit protein bL17 from Campylobacter hominis (strain ATCC BAA-381 / DSM 21671 / CCUG 45161 / LMG 19568 / NCTC 13146 / CH001A).